The primary structure comprises 199 residues: Twist-related protein 1 (199 aa).

Low complexity predominate over residues 1–18; the sequence is MMQDVSSSPVSPADDSLS. The tract at residues 1–102 is disordered; the sequence is MMQDVSSSPV…GGGSPQSYEE (102 aa). Basic residues predominate over residues 34 to 43; that stretch reads RGGRKRRSSR. 2 stretches are compositionally biased toward gly residues: residues 46-65 and 80-96; these read AGGGAGPGGAAGGGVGGGDE and GCGGGAGGGGSSSGGGS. Residues 105-156 enclose the bHLH domain; it reads TQRVMANVRERQRTQSLNEAFAALRKIIPTLPSDKLSKIQTLKLAARYIDFL. Residues 158 to 188 form a sufficient for transactivation activity region; the sequence is QVLQSDELDSKMASCSYVAHERLSYAFSVWR.

Efficient DNA binding requires dimerization with another bHLH protein. Homodimer or heterodimer with E proteins such as TCF3. ID1 binds preferentially to TCF3 but does not interact efficiently with TWIST1 so ID1 levels control the amount of TCF3 available to dimerize with TWIST and thus determine the type of dimer formed.

It is found in the nucleus. In terms of biological role, acts as a transcriptional regulator. Inhibits myogenesis by sequestrating E proteins, inhibiting trans-activation by MEF2, and inhibiting DNA-binding by MYOD1 through physical interaction. This interaction probably involves the basic domains of both proteins. Also represses expression of pro-inflammatory cytokines such as TNFA and IL1B. Regulates cranial suture patterning and fusion. Activates transcription as a heterodimer with E proteins. Regulates gene expression differentially, depending on dimer composition. Homodimers induce expression of FGFR2 and POSTN while heterodimers repress FGFR2 and POSTN expression and induce THBS1 expression. Heterodimerization is also required for osteoblast differentiation. Represses the activity of the circadian transcriptional activator: NPAS2-BMAL1 heterodimer. The sequence is that of Twist-related protein 1 (TWIST1) from Microcebus murinus (Gray mouse lemur).